The following is an 81-amino-acid chain: MEITKDQFYLLQDKVSEIYEIAYSKNRETVKIESSKLMLQLEEIERDLIALEFFCGEVKTVTINDYVLGEISYLYEAIIND.

Residue Lys5 forms a Glycyl lysine isopeptide (Lys-Gly) (interchain with G-Cter in host protein DncV) linkage.

Post-translationally, cross-linked via an isopeptide bond to E.coli host protein DncV during infection.

This is an uncharacterized protein from Enterobacteria phage T4 (Bacteriophage T4).